We begin with the raw amino-acid sequence, 100 residues long: Aspartyl/glutamyl-tRNA(Asn/Gln) amidotransferase subunit C (100 aa).

It belongs to the GatC family. In terms of assembly, heterotrimer of A, B and C subunits.

It catalyses the reaction L-glutamyl-tRNA(Gln) + L-glutamine + ATP + H2O = L-glutaminyl-tRNA(Gln) + L-glutamate + ADP + phosphate + H(+). The catalysed reaction is L-aspartyl-tRNA(Asn) + L-glutamine + ATP + H2O = L-asparaginyl-tRNA(Asn) + L-glutamate + ADP + phosphate + 2 H(+). Functionally, allows the formation of correctly charged Asn-tRNA(Asn) or Gln-tRNA(Gln) through the transamidation of misacylated Asp-tRNA(Asn) or Glu-tRNA(Gln) in organisms which lack either or both of asparaginyl-tRNA or glutaminyl-tRNA synthetases. The reaction takes place in the presence of glutamine and ATP through an activated phospho-Asp-tRNA(Asn) or phospho-Glu-tRNA(Gln). In Staphylococcus aureus (strain Newman), this protein is Aspartyl/glutamyl-tRNA(Asn/Gln) amidotransferase subunit C.